We begin with the raw amino-acid sequence, 133 residues long: Large ribosomal subunit protein bL17 (133 aa).

Belongs to the bacterial ribosomal protein bL17 family. As to quaternary structure, part of the 50S ribosomal subunit. Contacts protein L32.

The sequence is that of Large ribosomal subunit protein bL17 from Verminephrobacter eiseniae (strain EF01-2).